Reading from the N-terminus, the 404-residue chain is Cysteine desulfurase IscS (404 aa).

Residues 75-76, Asn155, Gln183, and 203-205 each bind pyridoxal 5'-phosphate; these read AT and SGH. An N6-(pyridoxal phosphate)lysine modification is found at Lys206. Thr243 is a binding site for pyridoxal 5'-phosphate. Cys328 acts as the Cysteine persulfide intermediate in catalysis. Position 328 (Cys328) interacts with [2Fe-2S] cluster.

It belongs to the class-V pyridoxal-phosphate-dependent aminotransferase family. NifS/IscS subfamily. As to quaternary structure, homodimer. Forms a heterotetramer with IscU, interacts with other sulfur acceptors. Pyridoxal 5'-phosphate serves as cofactor.

It is found in the cytoplasm. The enzyme catalyses (sulfur carrier)-H + L-cysteine = (sulfur carrier)-SH + L-alanine. Its pathway is cofactor biosynthesis; iron-sulfur cluster biosynthesis. Master enzyme that delivers sulfur to a number of partners involved in Fe-S cluster assembly, tRNA modification or cofactor biosynthesis. Catalyzes the removal of elemental sulfur and selenium atoms from cysteine and selenocysteine to produce alanine. Functions as a sulfur delivery protein for Fe-S cluster synthesis onto IscU, an Fe-S scaffold assembly protein, as well as other S acceptor proteins. Also functions as a selenium delivery protein in the pathway for the biosynthesis of selenophosphate. The chain is Cysteine desulfurase IscS from Salmonella typhi.